The chain runs to 151 residues: Ribosome maturation factor RimP (151 aa).

The protein belongs to the RimP family.

The protein localises to the cytoplasm. Required for maturation of 30S ribosomal subunits. The chain is Ribosome maturation factor RimP from Mannheimia succiniciproducens (strain KCTC 0769BP / MBEL55E).